The primary structure comprises 435 residues: MFLDTAKVSVQAGRGGDGMVAFRREKYVPNGGPWGGDGGKGGSVIFKVDEGLRTLMDFRYNRKFKAKSGEKGMTKGMHGRGSEDLIISVPQGTTVRDAETGKVLTDLVEHGQEFVVAKGGRGGRGNIRFATPRNPAPEIAENGEPGEERQLELELKILADVGLVGFPSVGKSTLLSVVSSAKPKIGAYHFTTIVPNLGMVRTKSGESFAMADLPGLIEGASQGVGLGTQFLRHIERTRVILHVIDMSAAEGRDPYEDYVAINKELEAYNLRLMERPQIIVANKMDMPEAKEQLQRFKEQLAAQYDDFEELPMIFPISSLAHQGLDSLLEATAELLAKTDDFLLYDEADFAEDEAYYGFAAEEKAFEISRADDAAWVLSGEKLERLFVMTNLERDESIMKFARQLRGMGVDEALRERGAKDGDIVRIGKFEFEFVD.

Residues 1–158 (MFLDTAKVSV…RQLELELKIL (158 aa)) form the Obg domain. Positions 159–336 (ADVGLVGFPS…LLEATAELLA (178 aa)) constitute an OBG-type G domain. Residues 165–172 (GFPSVGKS), 190–194 (FTTIV), 212–215 (DLPG), 282–285 (NKMD), and 317–319 (SSL) each bind GTP. Mg(2+)-binding residues include S172 and T192. In terms of domain architecture, OCT spans 357-435 (GFAAEEKAFE…IGKFEFEFVD (79 aa)).

Belongs to the TRAFAC class OBG-HflX-like GTPase superfamily. OBG GTPase family. In terms of assembly, monomer. The cofactor is Mg(2+).

It is found in the cytoplasm. Functionally, an essential GTPase which binds GTP, GDP and possibly (p)ppGpp with moderate affinity, with high nucleotide exchange rates and a fairly low GTP hydrolysis rate. Plays a role in control of the cell cycle, stress response, ribosome biogenesis and in those bacteria that undergo differentiation, in morphogenesis control. The polypeptide is GTPase Obg (Streptococcus equi subsp. zooepidemicus (strain MGCS10565)).